Reading from the N-terminus, the 955-residue chain is Kinesin-like protein NACK2 (955 aa).

A Kinesin motor domain is found at 36-357; it reads KILVTIRVRP…LCFATSAKEV (322 aa). An ATP-binding site is contributed by 120–127; sequence GQTSSGKT. 2 coiled-coil regions span residues 366–443 and 566–604; these read VVAE…LKGS and KASL…VMHL.

This sequence belongs to the TRAFAC class myosin-kinesin ATPase superfamily. Kinesin family. KIN-7 subfamily.

The protein resides in the cytoplasm. It localises to the nucleus. It is found in the cytoskeleton. Its subcellular location is the phragmoplast. Probable plus end-directed motor protein that may function in the NACK-PQR (NPK1-NQK1/MEK1-NRK1) MAP kinase signaling pathway, which is essential for somatic cell cytokinesis, especially for the cell-plate formation and its expansion. May regulate the activity and the localization of NPK1, probably by association through the non-catalytic region of the kinase. This Nicotiana tabacum (Common tobacco) protein is Kinesin-like protein NACK2 (NACK2).